We begin with the raw amino-acid sequence, 93 residues long: Neutrophil cationic peptide 2 (93 aa).

An N-terminal signal peptide occupies residues 1 to 19; sequence MRTVPLFAACLLLTLMAQA. The propeptide occupies 20-62; that stretch reads EPLPRAADHSDTKMKGDREDHVAVISFWEEESTSLQDAGAGAG. Disulfide bonds link Cys65–Cys93, Cys67–Cys82, and Cys72–Cys92.

It belongs to the alpha-defensin family.

The protein resides in the secreted. Functionally, has antibiotic, anti-fungi and antiviral activity. The sequence is that of Neutrophil cationic peptide 2 from Cavia porcellus (Guinea pig).